The sequence spans 428 residues: 3-phosphoshikimate 1-carboxyvinyltransferase (428 aa).

3 residues coordinate 3-phosphoshikimate: lysine 21, serine 22, and arginine 26. Residue lysine 21 coordinates phosphoenolpyruvate. Glycine 92 and arginine 120 together coordinate phosphoenolpyruvate. 3-phosphoshikimate is bound by residues serine 165, glutamine 167, aspartate 313, and lysine 340. Glutamine 167 provides a ligand contact to phosphoenolpyruvate. Aspartate 313 (proton acceptor) is an active-site residue. The phosphoenolpyruvate site is built by arginine 344 and arginine 386.

Belongs to the EPSP synthase family. As to quaternary structure, monomer.

The protein resides in the cytoplasm. It carries out the reaction 3-phosphoshikimate + phosphoenolpyruvate = 5-O-(1-carboxyvinyl)-3-phosphoshikimate + phosphate. The protein operates within metabolic intermediate biosynthesis; chorismate biosynthesis; chorismate from D-erythrose 4-phosphate and phosphoenolpyruvate: step 6/7. Functionally, catalyzes the transfer of the enolpyruvyl moiety of phosphoenolpyruvate (PEP) to the 5-hydroxyl of shikimate-3-phosphate (S3P) to produce enolpyruvyl shikimate-3-phosphate and inorganic phosphate. This chain is 3-phosphoshikimate 1-carboxyvinyltransferase, found in Carboxydothermus hydrogenoformans (strain ATCC BAA-161 / DSM 6008 / Z-2901).